The chain runs to 175 residues: Two-on-two hemoglobin-3 (175 aa).

Residues Y85 and H98 each coordinate heme. The segment at 153 to 175 (QNEKPKHKPQCACKHAANKPAEE) is disordered.

This sequence belongs to the truncated hemoglobin family. Group II subfamily. In terms of assembly, homodimer when ferric. Interacts with RGLG3 and RGLG4. The cofactor is heme. As to expression, expressed ubiquitously, with higher levels in root tissue than in shoot tissue.

Functionally, hemoglobin-like protein that exhibits an unusual concentration-independent binding of O(2) and CO. May promote shoot organogenesis from root explants in vitro. Inhibits RGLG3 and RGLG4 ubiquitination activity. This Arabidopsis thaliana (Mouse-ear cress) protein is Two-on-two hemoglobin-3 (GLB3).